The chain runs to 553 residues: Glycerol kinase 3 (553 aa).

Thr-20 is a substrate binding site. Arg-24 lines the ATP pocket. Residues Arg-94, Tyr-148, and Asp-259 each coordinate substrate. Residues Thr-281, Gly-326, and 427-431 (GMTSN) contribute to the ATP site.

The protein belongs to the FGGY kinase family.

Its subcellular location is the mitochondrion outer membrane. The protein localises to the cytoplasm. It catalyses the reaction glycerol + ATP = sn-glycerol 3-phosphate + ADP + H(+). Its pathway is polyol metabolism; glycerol degradation via glycerol kinase pathway; sn-glycerol 3-phosphate from glycerol: step 1/1. May be involved in the regulation of glycerol uptake and metabolism. This Homo sapiens (Human) protein is Glycerol kinase 3.